The following is a 1039-amino-acid chain: Integrin alpha-IIb (1039 aa).

The signal sequence occupies residues 1–31 (MARALCPLQALWLLEWVLLLLGPCAAPPAWA). Residues 32–993 (LNLDPVQLTF…TQLLRALEER (962 aa)) are Extracellular-facing. FG-GAP repeat units follow at residues 35-96 (DPVQ…GGQC), 110-173 (VGSQ…RRAE), 187-238 (VEND…FSSY), 251-305 (SLSF…DSYY), 306-371 (QRLH…PHAL), 373-432 (APSL…GLRS), and 435-496 (SQVL…VQDS). Asparagine 46 carries N-linked (GlcNAc...) asparagine glycosylation. Disulfide bonds link cysteine 87–cysteine 96, cysteine 138–cysteine 161, and cysteine 177–cysteine 198. Glutamate 274, aspartate 276, and aspartate 278 together coordinate Ca(2+). A glycan (N-linked (GlcNAc...) asparagine) is linked at asparagine 280. Residues threonine 281, glutamate 283, aspartate 328, asparagine 330, aspartate 332, arginine 334, aspartate 336, aspartate 396, aspartate 398, aspartate 400, tyrosine 402, aspartate 404, aspartate 457, aspartate 459, asparagine 461, tyrosine 463, and aspartate 465 each contribute to the Ca(2+) site. 2 disulfide bridges follow: cysteine 504–cysteine 515 and cysteine 521–cysteine 576. Asparagine 601 carries N-linked (GlcNAc...) asparagine glycosylation. Disulfide bonds link cysteine 633-cysteine 639, cysteine 705-cysteine 718, cysteine 857-cysteine 921, and cysteine 911-cysteine 916. N-linked (GlcNAc...) asparagine glycosylation occurs at asparagine 711. O-linked (GalNAc...) serine; in variant S-874 glycosylation is present at isoleucine 874. Serine 878 is a glycosylation site (O-linked (GalNAc...) serine). At glutamine 891 the chain carries Pyrrolidone carboxylic acid; in light chain form 1. Asparagine 962 carries an N-linked (GlcNAc...) asparagine glycan. A helical membrane pass occupies residues 994–1019 (AIPIWWVLVGVLGGLLLLTILVLAMW). The Cytoplasmic segment spans residues 1020–1039 (KVGFFKRNRPPLEEDDEEGE). The GFFKR motif signature appears at 1022–1026 (GFFKR).

Belongs to the integrin alpha chain family. Heterodimer of an alpha and a beta subunit. The alpha subunit is composed of a heavy and a light chain linked by a disulfide bond. Alpha-IIb associates with beta-3. Directly interacts with RNF181. Interacts (via C-terminus cytoplasmic tail region) with CIB1; the interaction is direct and calcium-dependent. Interacts (via C-terminus cytoplasmic tail region) with CIB2, CIB3 and CIB4; the interactions are stabilized/increased in a calcium and magnesium-dependent manner. ITGA2B:ITGB3 interacts with PPIA/CYPA; the interaction is ROS and PPIase activity-dependent and is increased in the presence of thrombin. ITGA2B:ITGB3 interacts with SELP (via C-type lectin domain); the interaction mediates cell-cell interaction and adhesion. Cleaved by ELANE; the cleavage promotes activation of platelet fibrinogen receptor integrin alpha-IIb/beta-3. In terms of tissue distribution, isoform 1 and isoform 2 are expressed in platelets and megakaryocytes, but not in reticulocytes. Not detected in Jurkat, nor in U937 cell lines. Isoform 3 is expressed in prostate adenocarcinoma, as well as in several erythroleukemia, prostate adenocarcinoma and melanoma cell lines, including PC-3, DU-145, HEL, WM983A, WM983B and WM35. Not detected in platelets, nor in normal prostate (at protein level).

The protein localises to the membrane. Integrin alpha-IIb/beta-3 is a receptor for fibronectin, fibrinogen, plasminogen, prothrombin, thrombospondin and vitronectin. It recognizes the sequence R-G-D in a wide array of ligands. It recognizes the sequence H-H-L-G-G-G-A-K-Q-A-G-D-V in fibrinogen gamma chain. Following activation integrin alpha-IIb/beta-3 brings about platelet/platelet interaction through binding of soluble fibrinogen. This step leads to rapid platelet aggregation which physically plugs ruptured endothelial cell surface. This chain is Integrin alpha-IIb (ITGA2B), found in Homo sapiens (Human).